The chain runs to 436 residues: GTPase Der (436 aa).

2 consecutive EngA-type G domains span residues 4–167 (PTIA…PNTS) and 175–351 (IKFS…MNQN). GTP is bound by residues 10 to 17 (GRPNVGKS), 57 to 61 (DTGGI), 119 to 122 (NKVD), 181 to 188 (GRPNVGKS), 229 to 233 (DTAGM), and 294 to 297 (NKWD). Residues 352–436 (LRIPSALLND…PIKIIPRRRK (85 aa)) form the KH-like domain.

Belongs to the TRAFAC class TrmE-Era-EngA-EngB-Septin-like GTPase superfamily. EngA (Der) GTPase family. Associates with the 50S ribosomal subunit.

Functionally, GTPase that plays an essential role in the late steps of ribosome biogenesis. This is GTPase Der from Enterococcus faecalis (strain ATCC 700802 / V583).